The chain runs to 389 residues: uncharacterized protein (389 aa).

Residues 1 to 23 (MHFAKLGAIGLLGSIICAYAASA) form the signal peptide.

This sequence belongs to the IUNH family.

The protein localises to the endoplasmic reticulum lumen. This is an uncharacterized protein from Schizosaccharomyces pombe (strain 972 / ATCC 24843) (Fission yeast).